Consider the following 3795-residue polypeptide: NBPF family member NBPF10 (3795 aa).

Positions Arg-75–Ala-119 form a coiled coil. The segment at Lys-161–Pro-200 is disordered. Residues Glu-165 to Glu-177 are compositionally biased toward acidic residues. One can recognise an Olduvai 1 domain in the interval Glu-165–Pro-259. Residues Glu-190 to Pro-200 show a composition bias toward basic and acidic residues. A coiled-coil region spans residues Arg-346–Ala-390. Olduvai domains follow at residues Glu-436 to Pro-528, Glu-529 to Gly-600, Arg-601 to Pro-692, Ser-695 to Asp-750, Arg-751 to Lys-843, Glu-844 to Pro-936, Ser-939 to Asp-994, Arg-995 to Lys-1087, Glu-1088 to Pro-1180, Ser-1183 to Asp-1238, Arg-1239 to Lys-1331, Glu-1332 to Pro-1424, Ser-1427 to Asp-1482, Arg-1483 to Lys-1575, Glu-1576 to Pro-1668, Ser-1671 to Asp-1726, Arg-1727 to Lys-1819, Glu-1820 to Pro-1912, Ser-1915 to Asp-1970, Arg-1971 to Lys-2063, Glu-2064 to Pro-2156, Ser-2159 to Asp-2214, Arg-2215 to Lys-2307, Glu-2308 to Pro-2400, Ser-2403 to Asp-2458, Arg-2459 to Lys-2551, Glu-2552 to Pro-2644, Ser-2647 to Asp-2702, Arg-2703 to Lys-2795, Glu-2796 to Pro-2888, Ser-2891 to Asp-2946, Arg-2947 to Lys-3039, Glu-3040 to Pro-3132, Ser-3135 to Asp-3190, Arg-3191 to Lys-3283, Glu-3284 to Pro-3376, Ser-3379 to Asp-3434, Arg-3435 to Lys-3527, Glu-3528 to Pro-3620, Ser-3623 to Lys-3696, and Glu-3697 to Gln-3795. Disordered stretches follow at residues Glu-451–Leu-475 and Trp-520–Ser-566. Acidic residues-rich tracts occupy residues Asn-530–Glu-539 and Glu-550–Asp-562. The segment at Lys-830–Leu-868 is disordered. The segment covering Gly-831–Arg-849 has biased composition (basic residues). Residues Lys-1073 to Arg-1109 are disordered. The span at Gly-1075 to Arg-1093 shows a compositional bias: basic residues. 2 disordered regions span residues Lys-1242–Leu-1261 and Lys-1318–Arg-1353. Over residues Gly-1319–Arg-1337 the composition is skewed to basic residues. Residues Lys-1562 to Leu-1600 form a disordered region. The span at Gly-1563–Arg-1581 shows a compositional bias: basic residues. The disordered stretch occupies residues Lys-1806 to Leu-1844. A compositionally biased stretch (basic residues) spans Gly-1807–Arg-1825. The interval Lys-2050–Leu-2088 is disordered. Positions Gly-2051 to Arg-2069 are enriched in basic residues. The tract at residues Lys-2294–Leu-2332 is disordered. The span at Gly-2295 to Arg-2313 shows a compositional bias: basic residues. The tract at residues Lys-2538–Leu-2576 is disordered. A compositionally biased stretch (basic residues) spans Gly-2539 to Arg-2557. A disordered region spans residues Lys-2782 to Leu-2820. Basic residues predominate over residues Gly-2783–Arg-2801. A disordered region spans residues Lys-3026–Leu-3064. Over residues Gly-3027–Arg-3045 the composition is skewed to basic residues. 2 disordered regions span residues Lys-3194–Leu-3213 and Lys-3270–Leu-3308. The segment covering Gly-3271 to Arg-3289 has biased composition (basic residues). Disordered stretches follow at residues Lys-3514–Leu-3552 and Gly-3684–Leu-3716. Basic residues-rich tracts occupy residues Gly-3515–Arg-3533 and Gly-3684–Arg-3702.

Belongs to the NBPF family.

Its subcellular location is the cytoplasm. The protein is NBPF family member NBPF10 of Homo sapiens (Human).